Consider the following 283-residue polypeptide: Putative transcription factor kapC (283 aa).

Positions 1 to 10 (MQPTLAPAPH) are enriched in pro residues. The interval 1 to 121 (MQPTLAPAPH…NRAAQRAFRQ (121 aa)) is disordered. The span at 26–42 (HDQLLAAHQHLSHPQQA) shows a compositional bias: low complexity. Positions 55-67 (QPNTTSPRDQNNI) are enriched in polar residues. The bZIP domain occupies 102–165 (PLSTSKRAAQ…EYIINLQSRL (64 aa)). A basic motif region spans residues 103 to 126 (LSTSKRAAQNRAAQRAFRQRKESY). A compositionally biased stretch (low complexity) spans 108-118 (RAAQNRAAQRA). Positions 130 to 161 (LEEQVKEFDNTNETMKQLQAENYQLREYIINL) are leucine-zipper. Positions 178-283 (NIDLNQPRND…EPGHGLPVVS (106 aa)) are disordered.

This sequence belongs to the bZIP family.

It localises to the nucleus. Functionally, putative transcription factor. The sequence is that of Putative transcription factor kapC (kapC) from Aspergillus niger (strain ATCC MYA-4892 / CBS 513.88 / FGSC A1513).